We begin with the raw amino-acid sequence, 301 residues long: 2-methylisocitrate lyase (301 aa).

53-55 (SGA) is a binding site for substrate. Asp92 and Asp94 together coordinate Mg(2+). Residues 129-130 (CG), Arg162, Glu192, 214-216 (NMT), Arg245, and Arg274 contribute to the substrate site.

This sequence belongs to the isocitrate lyase/PEP mutase superfamily. Methylisocitrate lyase family. The cofactor is Mg(2+).

It catalyses the reaction 3-hydroxybutane-1,2,3-tricarboxylate = pyruvate + succinate. Functionally, involved in the methylcitric acid cycle. Catalyzes the cleavage of 2-methylisocitrate to yield pyruvate and succinate. This Bacillus subtilis (strain 168) protein is 2-methylisocitrate lyase.